The primary structure comprises 304 residues: UDP-N-acetylenolpyruvoylglucosamine reductase (304 aa).

In terms of domain architecture, FAD-binding PCMH-type spans 33–198 (IGGPADLLVM…LEVVLALQEG (166 aa)). The active site involves Arg-177. Ser-227 (proton donor) is an active-site residue. Glu-297 is a catalytic residue.

The protein belongs to the MurB family. FAD serves as cofactor.

It localises to the cytoplasm. It catalyses the reaction UDP-N-acetyl-alpha-D-muramate + NADP(+) = UDP-N-acetyl-3-O-(1-carboxyvinyl)-alpha-D-glucosamine + NADPH + H(+). Its pathway is cell wall biogenesis; peptidoglycan biosynthesis. Cell wall formation. The sequence is that of UDP-N-acetylenolpyruvoylglucosamine reductase from Alkaliphilus metalliredigens (strain QYMF).